Reading from the N-terminus, the 747-residue chain is 3',5'-cyclic-AMP phosphodiesterase 4D (747 aa).

The interval 1 to 28 is disordered; the sequence is MERDTCDVLSRSKSASEETLHSCNEEED. Basic and acidic residues predominate over residues 14 to 24; the sequence is SASEETLHSCN. Serine 238, serine 240, serine 287, and serine 314 each carry phosphoserine. The tract at residues 282-302 is disordered; sequence EVEIPSPTQKEKEKKKRPMSQ. The region spanning 325 to 654 is the PDEase domain; it reads VKTEQEDVLA…EWYQSTIPQS (330 aa). Lysine 326 participates in a covalent cross-link: Glycyl lysine isopeptide (Lys-Gly) (interchain with G-Cter in SUMO). Histidine 401 (proton donor) is an active-site residue. Residue histidine 401 coordinates 3',5'-cyclic AMP. Histidine 401 contacts AMP. Residues histidine 405, histidine 441, aspartate 442, and aspartate 559 each contribute to the Zn(2+) site. The AMP site is built by aspartate 442, aspartate 559, asparagine 562, glutamine 610, and phenylalanine 613. Position 442 (aspartate 442) interacts with Mg(2+). Position 442 (aspartate 442) interacts with Mn(2+). 3',5'-cyclic AMP is bound by residues glutamine 610 and phenylalanine 613. The interval 649 to 747 is disordered; it reads STIPQSPSPA…CVPDDCCPDT (99 aa). Positions 701–712 are enriched in polar residues; that stretch reads CSDSKTLCTQDS. Acidic residues predominate over residues 718–734; that stretch reads PLDEQVEEEAVAEEESQ.

Belongs to the cyclic nucleotide phosphodiesterase family. PDE4 subfamily. In terms of assembly, homodimer for the long isoforms. Isoforms with truncated N-termini are monomeric. Binds ARRB2. Interacts with PDE4DIP. Identified in a complex composed of RYR1, PDE4D, PKA, FKBP1A and protein phosphatase 1 (PP1). Interacts (via N-terminal region) with SHANK2 (via proline-rich region); the interaction is increased in a PKA-dependent manner. Requires Zn(2+) as cofactor. Mg(2+) is required as a cofactor. The cofactor is Mn(2+). Post-translationally, sumoylation of long isoforms by PIAS4 augments their activation by PKA phosphorylation and represses their inhibition by ERK phosphorylation. Expressed in brain (at protein level). Isoform 7 is detected in heart, brain, lung, kidney and testis.

It is found in the cytoplasm. The protein localises to the membrane. The protein resides in the cytoskeleton. It localises to the microtubule organizing center. Its subcellular location is the centrosome. It is found in the apical cell membrane. It carries out the reaction 3',5'-cyclic AMP + H2O = AMP + H(+). It participates in purine metabolism; 3',5'-cyclic AMP degradation; AMP from 3',5'-cyclic AMP: step 1/1. With respect to regulation, inhibited by rolipram. Activated by phosphatidic acid. Its function is as follows. Hydrolyzes the second messenger cAMP, which is a key regulator of many important physiological processes. In Mus musculus (Mouse), this protein is 3',5'-cyclic-AMP phosphodiesterase 4D (Pde4d).